The following is a 328-amino-acid chain: Ribosomal protein L11 methyltransferase (328 aa).

Residues Thr158, Gly180, Asp202, and Asn246 each coordinate S-adenosyl-L-methionine.

Belongs to the methyltransferase superfamily. PrmA family.

The protein localises to the cytoplasm. The catalysed reaction is L-lysyl-[protein] + 3 S-adenosyl-L-methionine = N(6),N(6),N(6)-trimethyl-L-lysyl-[protein] + 3 S-adenosyl-L-homocysteine + 3 H(+). Its function is as follows. Methylates ribosomal protein L11. This chain is Ribosomal protein L11 methyltransferase, found in Polynucleobacter necessarius subsp. necessarius (strain STIR1).